We begin with the raw amino-acid sequence, 194 residues long: MLKEKLKKYKIILASGSPRRQQFFKDLDLDFEIRLKDVEEIYPPELKAVEITNFLAELKANAFEGELKENEILVTSDTIVWHQNKALGKPKNAEDAFQMIKSMSNTTHEVITSVCFKTNTAFTLLHDVTKVTFKDLSDESILYYIENYKPYDKAGAYGIQEWFGFMAVTKVEGSYTNVMGLPTAKVYEYLTTLV.

The active-site Proton acceptor is Asp77.

It belongs to the Maf family. YhdE subfamily. The cofactor is a divalent metal cation.

It is found in the cytoplasm. It catalyses the reaction dTTP + H2O = dTMP + diphosphate + H(+). The enzyme catalyses UTP + H2O = UMP + diphosphate + H(+). Its function is as follows. Nucleoside triphosphate pyrophosphatase that hydrolyzes dTTP and UTP. May have a dual role in cell division arrest and in preventing the incorporation of modified nucleotides into cellular nucleic acids. The chain is dTTP/UTP pyrophosphatase from Flavobacterium johnsoniae (strain ATCC 17061 / DSM 2064 / JCM 8514 / BCRC 14874 / CCUG 350202 / NBRC 14942 / NCIMB 11054 / UW101) (Cytophaga johnsonae).